Here is a 459-residue protein sequence, read N- to C-terminus: Bifunctional protein GlmU (459 aa).

The interval 1 to 230 (MSNRFAVILA…FDETLGVNDR (230 aa)) is pyrophosphorylase. UDP-N-acetyl-alpha-D-glucosamine is bound by residues 9–12 (LAAG), Lys23, Gln73, and 78–79 (GT). Residue Asp103 participates in Mg(2+) binding. Residues Gly140, Glu155, Asn170, and Asn228 each coordinate UDP-N-acetyl-alpha-D-glucosamine. A Mg(2+)-binding site is contributed by Asn228. A linker region spans residues 231 to 251 (VALSQAEIIMKNRINRKNMVN). The N-acetyltransferase stretch occupies residues 252 to 459 (GVTIIDPSNT…VDQLLNKKKS (208 aa)). The UDP-N-acetyl-alpha-D-glucosamine site is built by Arg333 and Lys351. His363 functions as the Proton acceptor in the catalytic mechanism. Residues Tyr366 and Asn377 each coordinate UDP-N-acetyl-alpha-D-glucosamine. Acetyl-CoA is bound by residues 386-387 (NY), Ala423, and Arg440.

It in the N-terminal section; belongs to the N-acetylglucosamine-1-phosphate uridyltransferase family. The protein in the C-terminal section; belongs to the transferase hexapeptide repeat family. As to quaternary structure, homotrimer. The cofactor is Mg(2+).

The protein localises to the cytoplasm. It catalyses the reaction alpha-D-glucosamine 1-phosphate + acetyl-CoA = N-acetyl-alpha-D-glucosamine 1-phosphate + CoA + H(+). It carries out the reaction N-acetyl-alpha-D-glucosamine 1-phosphate + UTP + H(+) = UDP-N-acetyl-alpha-D-glucosamine + diphosphate. It participates in nucleotide-sugar biosynthesis; UDP-N-acetyl-alpha-D-glucosamine biosynthesis; N-acetyl-alpha-D-glucosamine 1-phosphate from alpha-D-glucosamine 6-phosphate (route II): step 2/2. It functions in the pathway nucleotide-sugar biosynthesis; UDP-N-acetyl-alpha-D-glucosamine biosynthesis; UDP-N-acetyl-alpha-D-glucosamine from N-acetyl-alpha-D-glucosamine 1-phosphate: step 1/1. The protein operates within bacterial outer membrane biogenesis; LPS lipid A biosynthesis. Its function is as follows. Catalyzes the last two sequential reactions in the de novo biosynthetic pathway for UDP-N-acetylglucosamine (UDP-GlcNAc). The C-terminal domain catalyzes the transfer of acetyl group from acetyl coenzyme A to glucosamine-1-phosphate (GlcN-1-P) to produce N-acetylglucosamine-1-phosphate (GlcNAc-1-P), which is converted into UDP-GlcNAc by the transfer of uridine 5-monophosphate (from uridine 5-triphosphate), a reaction catalyzed by the N-terminal domain. The sequence is that of Bifunctional protein GlmU from Bacillus mycoides (strain KBAB4) (Bacillus weihenstephanensis).